The primary structure comprises 338 residues: Fructose-1,6-bisphosphatase class 1 (338 aa).

Glu-90, Asp-112, Leu-114, and Asp-115 together coordinate Mg(2+). Residues 115–118, Asn-207, and Lys-273 each bind substrate; that span reads DGSS. Mg(2+) is bound at residue Glu-279.

The protein belongs to the FBPase class 1 family. In terms of assembly, homotetramer. Mg(2+) serves as cofactor.

It is found in the cytoplasm. It carries out the reaction beta-D-fructose 1,6-bisphosphate + H2O = beta-D-fructose 6-phosphate + phosphate. The protein operates within carbohydrate biosynthesis; gluconeogenesis. The protein is Fructose-1,6-bisphosphatase class 1 of Stenotrophomonas maltophilia (strain K279a).